The following is a 206-amino-acid chain: Cytochrome c oxidase assembly protein CtaG (206 aa).

Over 1 to 22 (MTEQPTNRNDVPRRGLGRDATV) the chain is Cytoplasmic. The chain crosses the membrane as a helical; Signal-anchor for type II membrane protein span at residues 23-43 (ASICGLVVALMVGASYAAVPF). The Periplasmic segment spans residues 44–206 (YNWFCRATGF…GEPDSRKGAL (163 aa)).

The protein belongs to the COX11/CtaG family.

The protein localises to the cell inner membrane. Exerts its effect at some terminal stage of cytochrome c oxidase synthesis, probably by being involved in the insertion of the copper B into subunit I. This Rhodopseudomonas palustris (strain BisB18) protein is Cytochrome c oxidase assembly protein CtaG.